A 500-amino-acid chain; its full sequence is 5-taurinomethyluridine-[tRNA] synthase subunit GTPB3, mitochondrial (500 aa).

Residues 1-73 constitute a mitochondrion transit peptide; the sequence is MHFISCCLRR…RRLTRSLPAP (73 aa). Positions 53, 111, and 151 each coordinate 5,10-methylenetetrahydrofolate. Positions 248–422 constitute a TrmE-type G domain; sequence GVHVVIAGST…LLTLLHNTLK (175 aa). Residues 255–262, 281–285, 302–305, and 373–376 each bind GTP; these read GSTNAGKS, GTTRD, DTAG, and NESD. Asn258 serves as a coordination point for K(+). Residues Ser262 and Thr283 each coordinate Mg(2+). Lys500 lines the 5,10-methylenetetrahydrofolate pocket.

Belongs to the TRAFAC class TrmE-Era-EngA-EngB-Septin-like GTPase superfamily. TrmE GTPase family. K(+) is required as a cofactor.

The protein resides in the mitochondrion. The enzyme catalyses GTP + H2O = GDP + phosphate + H(+). Functionally, GTPase component of the GTPBP3-MTO1 complex that catalyzes the 5-taurinomethyluridine (taum(5)U) modification at the 34th wobble position (U34) of mitochondrial tRNAs (mt-tRNAs), which plays a role in mt-tRNA decoding and mitochondrial translation. Taum(5)U formation on mammalian mt-tRNA requires the presence of both GTPBP3-mediated GTPase activity and MTO1 catalytic activity. The protein is 5-taurinomethyluridine-[tRNA] synthase subunit GTPB3, mitochondrial (gtpbp3) of Danio rerio (Zebrafish).